We begin with the raw amino-acid sequence, 37 residues long: Large ribosomal subunit protein bL36c (37 aa).

This sequence belongs to the bacterial ribosomal protein bL36 family.

Its subcellular location is the plastid. It localises to the chloroplast. The protein is Large ribosomal subunit protein bL36c (rpl36) of Chlamydomonas reinhardtii (Chlamydomonas smithii).